Reading from the N-terminus, the 205-residue chain is Thymidylate kinase (205 aa).

Residue 7–14 (GIDGSGKT) participates in ATP binding.

Belongs to the thymidylate kinase family.

The enzyme catalyses dTMP + ATP = dTDP + ADP. In terms of biological role, phosphorylation of dTMP to form dTDP in both de novo and salvage pathways of dTTP synthesis. This is Thymidylate kinase from Wolbachia sp. subsp. Brugia malayi (strain TRS).